Here is a 97-residue protein sequence, read N- to C-terminus: Homeobox protein HD-9 (97 aa).

Positions 6–65 form a DNA-binding region, homeobox; that stretch reads MPAKKSRLSKAQRDFLDTYFEVNPHPNTQERAYIASQSLVSEEKIRNWFQNRRTRERGDC.

It is found in the nucleus. In Encephalitozoon cuniculi (strain GB-M1) (Microsporidian parasite), this protein is Homeobox protein HD-9 (HD-9).